The sequence spans 919 residues: GPI ethanolamine phosphate transferase 1 (919 aa).

Residues 1–8 are Cytoplasmic-facing; the sequence is MWSRHRLY. Residues 9–29 form a helical membrane-spanning segment; sequence FIVAGVLFHLFYLWSIFDIYF. The Lumenal portion of the chain corresponds to 30 to 456; it reads VSPLVHGMKQ…TTYNWRFIRT (427 aa). 5 N-linked (GlcNAc...) asparagine glycosylation sites follow: asparagine 138, asparagine 196, asparagine 201, asparagine 285, and asparagine 311. The chain crosses the membrane as a helical span at residues 457 to 477; it reads IVTLGFLGWIVYSFSIFLRLF. The Cytoplasmic segment spans residues 478–487; that stretch reads ILNRDYNSHK. The helical transmembrane segment at 488–508 threads the bilayer; sequence SLLNYFIFGSLTIILNYVLYY. At 509–510 the chain is on the lumenal side; sequence QK. A helical membrane pass occupies residues 511-531; it reads APFNYYMYLFFPLIFWSEIFT. Residues 532 to 558 lie on the Cytoplasmic side of the membrane; the sequence is DRVVLDDGVKEFLKGISIPKRIILVSA. The chain crosses the membrane as a helical span at residues 559–579; the sequence is IILVYESIVYAFFDRWIFSLI. At 580–598 the chain is on the lumenal side; that stretch reads FNMLSFYPLICGYRDWKRN. The chain crosses the membrane as a helical span at residues 599–619; that stretch reads TLWFITGAAISVFTLLDAVKI. Residue glutamate 620 is a topological domain, cytoplasmic. Residues 621-641 form a helical membrane-spanning segment; the sequence is SLTQINIASGLIVLTALSGFL. The Lumenal segment spans residues 642-653; it reads HLRKQLNSYTTT. Residues 654 to 674 traverse the membrane as a helical segment; it reads VFICQILLVILMVLATNKSIV. At 675 to 686 the chain is on the cytoplasmic side; that stretch reads SLQNRTGLPRDA. The chain crosses the membrane as a helical span at residues 687 to 707; that stretch reads QVAGWVILVVSLLLMPLIHYM. Over 708–718 the chain is Lumenal; that stretch reads KPNNNYKVRML. Residues 719–739 traverse the membrane as a helical segment; the sequence is IIFLTFAPTFIILTISFESFF. The Cytoplasmic segment spans residues 740–773; that stretch reads YLVFSAYIVQWIEIESKLKEQTPNTSHYKQLIRV. A helical transmembrane segment spans residues 774-794; sequence TIIGFFLLQNAFFGTGNVASI. At 795-815 the chain is on the lumenal side; sequence SSFSLDSVYRLMPIFDPFPMG. Residues 816 to 836 traverse the membrane as a helical segment; it reads ALLVIKLIIPYIILSAGLGIL. At 837–845 the chain is on the cytoplasmic side; sequence NLKLHIKDY. A helical transmembrane segment spans residues 846 to 866; that stretch reads TISTLIISTSDILSLNFFYLL. Residues 867–882 are Lumenal-facing; sequence KTEGSWLDIGITISNY. A helical membrane pass occupies residues 883–903; it reads CLAILSSLFMLILEIVAHVVL. Residues 904–919 are Cytoplasmic-facing; sequence KNVQLSKPVIASKKTN.

The protein belongs to the PIGG/PIGN/PIGO family. PIGN subfamily.

The protein resides in the endoplasmic reticulum membrane. It functions in the pathway glycolipid biosynthesis; glycosylphosphatidylinositol-anchor biosynthesis. Its function is as follows. Ethanolamine phosphate transferase involved in glycosylphosphatidylinositol-anchor biosynthesis. Transfers ethanolamine phosphate to the first alpha-1,4-linked mannose of the glycosylphosphatidylinositol precursor of GPI-anchor. The chain is GPI ethanolamine phosphate transferase 1 (MCD4) from Kluyveromyces lactis (strain ATCC 8585 / CBS 2359 / DSM 70799 / NBRC 1267 / NRRL Y-1140 / WM37) (Yeast).